A 102-amino-acid chain; its full sequence is Parathymosin (102 aa).

Residues 1-102 form a disordered region; the sequence is MSEKSVEAAA…RQKTENGASA (102 aa). Ser2 is modified (N-acetylserine). Phosphoserine is present on Ser2. An N6-acetyllysine modification is found at Lys4. Residues Ser5 and Ser13 each carry the phosphoserine modification. Positions 13-37 are enriched in basic and acidic residues; it reads SAKDLKEKKEKVEEKAGRKERKKEV. Lys15 is modified (N6-acetyllysine). Over residues 38–76 the composition is skewed to acidic residues; that stretch reads VEEEENGAEEEEEETAEDGEEEDDGDEEDEEEEEEEDEG. Thr52 bears the Phosphothreonine mark. N6-acetyllysine is present on Lys92.

Belongs to the pro/parathymosin family.

Functionally, parathymosin may mediate immune function by blocking the effect of prothymosin alpha which confers resistance to certain opportunistic infections. This is Parathymosin (PTMS) from Bos taurus (Bovine).